The chain runs to 1234 residues: 1-phosphatidylinositol 4,5-bisphosphate phosphodiesterase beta-3 (1234 aa).

Ala2 is modified (N-acetylalanine). The 152-residue stretch at 315-466 (MDMTQPLSAY…LMGRILVKNK (152 aa)) folds into the PI-PLC X-box domain. Catalysis depends on residues His330 and His377. Residues 465–586 (NKKRHRPSTG…GTASSEVNAT (122 aa)) form a disordered region. Phosphoserine is present on residues Ser472, Ser488, Ser493, and Ser535. Residues 486–513 (EQSNSALSESSAATEPSSPQLGSPSSDS) show a composition bias toward low complexity. The segment covering 554 to 566 (REDEEEDEEEEET) has biased composition (acidic residues). The segment covering 577–586 (GTASSEVNAT) has biased composition (polar residues). The 117-residue stretch at 589–705 (MSTLVNYVEP…GYLLKPEFMR (117 aa)) folds into the PI-PLC Y-box domain. Residues 706–834 (RPDKSFDPFT…RNEANQPLCL (129 aa)) form the C2 domain. The segment covering 886-907 (ASTEMCQETPSQQQGSQLSSNP) has biased composition (polar residues). A disordered region spans residues 886–936 (ASTEMCQETPSQQQGSQLSSNPVPNPLDDSPRWPPGPTTSPTSTSLSSPGQ). Positions 924 to 934 (TSPTSTSLSSP) are enriched in low complexity. A phosphoserine mark is found at Ser925 and Ser1105. Residues 1196-1234 (SEGLGDGPLVACASNGHAAGSGGHQSGADSESQEENTQL) are disordered. Positions 1231-1234 (NTQL) are interaction with SHANK2.

As to quaternary structure, interacts with LPAR2. Interacts with SHANK2. The cofactor is Ca(2+). In terms of tissue distribution, expressed in parotid gland, brain, liver, uterus, lung, heart, adrenal gland, and ovary. Not detected in spleen, pancreas, intestine, thymus or kidney.

It is found in the cytoplasm. It localises to the membrane. The protein localises to the nucleus. It carries out the reaction a 1,2-diacyl-sn-glycero-3-phospho-(1D-myo-inositol-4,5-bisphosphate) + H2O = 1D-myo-inositol 1,4,5-trisphosphate + a 1,2-diacyl-sn-glycerol + H(+). The enzyme catalyses a 1,2-diacyl-sn-glycero-3-phospho-(1D-myo-inositol) + H2O = 1D-myo-inositol 1-phosphate + a 1,2-diacyl-sn-glycerol + H(+). Activated by G(q)/G(11) G alpha proteins in response to ligand-binding to G protein-coupled receptors. Catalyzes the production of the second messenger molecules diacylglycerol (DAG) and inositol 1,4,5-trisphosphate (IP3). Key transducer of G protein-coupled receptor signaling: activated by G(q)/G(11) G alpha proteins downstream of G protein-coupled receptors activation. In neutrophils, participates in a phospholipase C-activating N-formyl peptide-activated GPCR (G protein-coupled receptor) signaling pathway by promoting RASGRP4 activation by DAG, to promote neutrophil functional responses. In Rattus norvegicus (Rat), this protein is 1-phosphatidylinositol 4,5-bisphosphate phosphodiesterase beta-3.